The following is a 344-amino-acid chain: MSEVLTVDAVLFGLLVFSGIIGNIMVIYVVFDCAKLCASRHLPPSDTILVHLCLANLLTSVFRTVPIFVSDLGLQVWLTAGWCRVFMLLWVWWRAVGCWVTLALSAFHCATLRRQHVSMGPLGHSRERRRVWVVLAVVWAANLLFSLPALVYTTQVRGNATVELMVISCTTRPLLGCVWEFPTFQQGYAFASSSLALNEVLPLVLMVGTNLATLQALGKHIRTVRAGGSTGAELDRHVSSERKAGHVIMALVALFVGCWVLQVAAVTYYNHNRGAHAEGLLTVAHFSASLFVGFSPLVVALGHGKLRRRISGILQSCMHRLKQTQDKPAEITEKDGRTTQSAMK.

Over 1 to 10 (MSEVLTVDAV) the chain is Extracellular. Residues 11–31 (LFGLLVFSGIIGNIMVIYVVF) form a helical membrane-spanning segment. Over 32–47 (DCAKLCASRHLPPSDT) the chain is Cytoplasmic. A helical transmembrane segment spans residues 48 to 68 (ILVHLCLANLLTSVFRTVPIF). Over 69 to 84 (VSDLGLQVWLTAGWCR) the chain is Extracellular. Cys83 and Cys169 are joined by a disulfide. A helical membrane pass occupies residues 85 to 105 (VFMLLWVWWRAVGCWVTLALS). The Cytoplasmic segment spans residues 106 to 130 (AFHCATLRRQHVSMGPLGHSRERRR). Residues 131 to 151 (VWVVLAVVWAANLLFSLPALV) form a helical membrane-spanning segment. At 152–186 (YTTQVRGNATVELMVISCTTRPLLGCVWEFPTFQQ) the chain is on the extracellular side. The N-linked (GlcNAc...) asparagine glycan is linked to Asn159. A helical membrane pass occupies residues 187–207 (GYAFASSSLALNEVLPLVLMV). Topologically, residues 208-246 (GTNLATLQALGKHIRTVRAGGSTGAELDRHVSSERKAGH) are cytoplasmic. A helical membrane pass occupies residues 247–267 (VIMALVALFVGCWVLQVAAVT). Over 268–279 (YYNHNRGAHAEG) the chain is Extracellular. Residues 280-300 (LLTVAHFSASLFVGFSPLVVA) traverse the membrane as a helical segment. Residues 301 to 344 (LGHGKLRRRISGILQSCMHRLKQTQDKPAEITEKDGRTTQSAMK) are Cytoplasmic-facing. Residues 324–337 (TQDKPAEITEKDGR) are compositionally biased toward basic and acidic residues. Positions 324-344 (TQDKPAEITEKDGRTTQSAMK) are disordered.

It belongs to the G-protein coupled receptor 1 family. As to expression, highly expressed in the olfactory rosette. Specifically localizes to crypt neurons in the olfactory neuroepithelium. Colocalizes with the inhibitory G-protein gnaia in crypt neurons. Not detected in other tissues tested.

It is found in the cell membrane. Probable olfactory receptor. This chain is Olfactory receptor class A-like protein 4 (ora4), found in Danio rerio (Zebrafish).